The chain runs to 392 residues: S-adenosylmethionine synthase (392 aa).

Histidine 17 contributes to the ATP binding site. Residue aspartate 19 coordinates Mg(2+). Glutamate 45 is a K(+) binding site. The L-methionine site is built by glutamate 58 and glutamine 102. Positions 102 to 112 (QSADIAQGVDA) are flexible loop. Residues 169-171 (DAK), 235-236 (KF), aspartate 244, 250-251 (RK), alanine 267, and lysine 271 each bind ATP. Aspartate 244 serves as a coordination point for L-methionine. Position 275 (lysine 275) interacts with L-methionine.

It belongs to the AdoMet synthase family. As to quaternary structure, homotetramer; dimer of dimers. Mg(2+) serves as cofactor. It depends on K(+) as a cofactor.

Its subcellular location is the cytoplasm. It catalyses the reaction L-methionine + ATP + H2O = S-adenosyl-L-methionine + phosphate + diphosphate. It participates in amino-acid biosynthesis; S-adenosyl-L-methionine biosynthesis; S-adenosyl-L-methionine from L-methionine: step 1/1. Its function is as follows. Catalyzes the formation of S-adenosylmethionine (AdoMet) from methionine and ATP. The overall synthetic reaction is composed of two sequential steps, AdoMet formation and the subsequent tripolyphosphate hydrolysis which occurs prior to release of AdoMet from the enzyme. The sequence is that of S-adenosylmethionine synthase from Methylobacterium nodulans (strain LMG 21967 / CNCM I-2342 / ORS 2060).